The sequence spans 632 residues: tRNA uridine 5-carboxymethylaminomethyl modification enzyme MnmG (632 aa).

FAD-binding positions include 13-18 (GGGHAG), V125, and S180. Residue 273–287 (GPRYCPSIEDKVMRF) coordinates NAD(+). Q370 contacts FAD.

It belongs to the MnmG family. Homodimer. Heterotetramer of two MnmE and two MnmG subunits. Requires FAD as cofactor.

Its subcellular location is the cytoplasm. Its function is as follows. NAD-binding protein involved in the addition of a carboxymethylaminomethyl (cmnm) group at the wobble position (U34) of certain tRNAs, forming tRNA-cmnm(5)s(2)U34. This chain is tRNA uridine 5-carboxymethylaminomethyl modification enzyme MnmG, found in Vibrio vulnificus (strain YJ016).